The following is a 726-amino-acid chain: MAR-binding filament-like protein 1 (726 aa).

The N-terminal 41 residues, 1–41 (MGFLIGGSCFVPSVPLHSRFLSSPSSSSSSSPSSSQFGLLC), are a transit peptide targeting the chloroplast. A thylakoid-targeting transit peptide spans 42 to 95 (SSNVAKFKRRRPTLASLNQEDGYEYDVASAKRRAFLLVGISVLPFLQLRSPALA). Over 96–124 (DERGNEIKTSKVDLETEVAVVSEGTSPNP) the chain is Lumenal, thylakoid. Residues 125 to 145 (FLALLNGLGIFSAGVLGALYA) form a helical membrane-spanning segment. A coiled-coil region spans residues 144–691 (YALARQDTKA…KGEILRMRSQ (548 aa)). The Stromal segment spans residues 146–726 (LARQDTKAAE…VRRRKSSTSS (581 aa)). Residues 678–726 (LGSAKGEILRMRSQPDSVKAVNSTDNKEKSDNTVTVKKVVRRRKSSTSS) form a disordered region. Residues 691 to 701 (QPDSVKAVNST) are compositionally biased toward polar residues. A Nuclear localization signal motif is present at residues 715 to 722 (KVVRRRKS). A compositionally biased stretch (basic residues) spans 715-726 (KVVRRRKSSTSS).

In terms of assembly, interacts with PTST2; the interaction is essential for the initiation of starch granules biosynthesis in leaf chloroplasts, for the correct location of the process in the stromal spaces between the thylakoid membranes, and for the association of PTST2 with the thylakoid membranes. Predicted to be translocated into the thylakoid by the Tat system. The position of the transit peptide cleavages have not been experimentally proven.

It is found in the plastid. Its subcellular location is the chloroplast. The protein localises to the chloroplast thylakoid membrane. It localises to the chloroplast stroma. The protein resides in the chloroplast nucleoid. It is found in the nucleus. Its subcellular location is the nucleus matrix. In terms of biological role, DNA-binding protein required for the initiation of starch granules biosynthesis in leaf chloroplasts. Anchored to the thylakoid membranes with its C-terminus facing into the stroma where it is essential for localizing PTST2 and SS4 to the stromal spaces between the thylakoid membranes in order to begin starch granule formation. Associated with leaf chloroplastic nucleoids in vivo. Binds to various chloroplastic double-stranded DNA fragments without particular sequence specificity in vitro. May function at the interface between nucleoids and thylakoids possibly by anchoring nucleoids to the thylakoid membrane system in mature chloroplasts. Likely to participate in nuclear architecture by connecting chromatin with the nuclear matrix and potentially with the nuclear envelope. This Arabidopsis thaliana (Mouse-ear cress) protein is MAR-binding filament-like protein 1.